The sequence spans 154 residues: 6,7-dimethyl-8-ribityllumazine synthase (154 aa).

5-amino-6-(D-ribitylamino)uracil contacts are provided by residues phenylalanine 22, 56-58 (SFE), and 81-83 (VLI). Residue 86 to 87 (ET) participates in (2S)-2-hydroxy-3-oxobutyl phosphate binding. Catalysis depends on histidine 89, which acts as the Proton donor. Phenylalanine 114 contributes to the 5-amino-6-(D-ribitylamino)uracil binding site. Arginine 128 contacts (2S)-2-hydroxy-3-oxobutyl phosphate.

This sequence belongs to the DMRL synthase family.

It carries out the reaction (2S)-2-hydroxy-3-oxobutyl phosphate + 5-amino-6-(D-ribitylamino)uracil = 6,7-dimethyl-8-(1-D-ribityl)lumazine + phosphate + 2 H2O + H(+). It functions in the pathway cofactor biosynthesis; riboflavin biosynthesis; riboflavin from 2-hydroxy-3-oxobutyl phosphate and 5-amino-6-(D-ribitylamino)uracil: step 1/2. Its function is as follows. Catalyzes the formation of 6,7-dimethyl-8-ribityllumazine by condensation of 5-amino-6-(D-ribitylamino)uracil with 3,4-dihydroxy-2-butanone 4-phosphate. This is the penultimate step in the biosynthesis of riboflavin. This chain is 6,7-dimethyl-8-ribityllumazine synthase, found in Chlamydia felis (strain Fe/C-56) (Chlamydophila felis).